A 231-amino-acid chain; its full sequence is Large ribosomal subunit protein uL1 (231 aa).

Belongs to the universal ribosomal protein uL1 family. In terms of assembly, part of the 50S ribosomal subunit.

In terms of biological role, binds directly to 23S rRNA. The L1 stalk is quite mobile in the ribosome, and is involved in E site tRNA release. Protein L1 is also a translational repressor protein, it controls the translation of the L11 operon by binding to its mRNA. In Cupriavidus pinatubonensis (strain JMP 134 / LMG 1197) (Cupriavidus necator (strain JMP 134)), this protein is Large ribosomal subunit protein uL1.